The sequence spans 379 residues: MTAIRYEFIKTCKQTGARLGRVHTPHGSFDTPTFMPVGTLATVKTMSPEELKAMDSGIILSNTYHLWLRPGHEIIREAGGLHKFMNWDRAILTDSGGFQVFSLSDFRRIEEEGVHFRNHLNGDKLFLSPEKAMEIQNALGSDIMMAFDECPPFPATFEYMKKSVERTSRWAERCLKAHERPQDQGLFGIVQGGEYEELRRQSAKDLVSMDFPGYAVGGLSVGEPKDIMNRVLEFTTPLLPDNKPRYLMGVGSPDSLIDGAIRGIDMFDCVLPTRIARNGTCMTSEGRLVVKNAKFARDFGPLDPNCDCYTCKNYSRAYIRHLMKCDETFGIRLTSYHNLHFLLNLMEQVRQAIREDRLGDFREEFFEQYGFNKPNAKNF.

The active-site Proton acceptor is the Asp-94. Substrate contacts are provided by residues 94 to 98 (DSGGF), Asp-148, Gln-191, and Gly-218. The segment at 249-255 (GVGSPDS) is RNA binding. The active-site Nucleophile is the Asp-268. Residues 273-277 (TRIAR) are RNA binding; important for wobble base 34 recognition. Residues Cys-306, Cys-308, Cys-311, and His-337 each coordinate Zn(2+).

This sequence belongs to the queuine tRNA-ribosyltransferase family. As to quaternary structure, homodimer. Within each dimer, one monomer is responsible for RNA recognition and catalysis, while the other monomer binds to the replacement base PreQ1. It depends on Zn(2+) as a cofactor.

It carries out the reaction 7-aminomethyl-7-carbaguanine + guanosine(34) in tRNA = 7-aminomethyl-7-carbaguanosine(34) in tRNA + guanine. It functions in the pathway tRNA modification; tRNA-queuosine biosynthesis. Functionally, catalyzes the base-exchange of a guanine (G) residue with the queuine precursor 7-aminomethyl-7-deazaguanine (PreQ1) at position 34 (anticodon wobble position) in tRNAs with GU(N) anticodons (tRNA-Asp, -Asn, -His and -Tyr). Catalysis occurs through a double-displacement mechanism. The nucleophile active site attacks the C1' of nucleotide 34 to detach the guanine base from the RNA, forming a covalent enzyme-RNA intermediate. The proton acceptor active site deprotonates the incoming PreQ1, allowing a nucleophilic attack on the C1' of the ribose to form the product. After dissociation, two additional enzymatic reactions on the tRNA convert PreQ1 to queuine (Q), resulting in the hypermodified nucleoside queuosine (7-(((4,5-cis-dihydroxy-2-cyclopenten-1-yl)amino)methyl)-7-deazaguanosine). The sequence is that of Queuine tRNA-ribosyltransferase from Bacillus cereus (strain G9842).